The chain runs to 116 residues: Phycoerythrin alpha-3 subunit (116 aa).

The (2R,3E)-phycoerythrobilin site is built by Ser-53, Glu-63, Arg-64, Cys-67, and Lys-85.

This sequence belongs to the phycoerythrin family. Heterotetramer of 2 different alpha chains and 2 identical beta chains which form 2 alpha-beta heterodimers within the heterotetramer. The two alpha-beta heterodimers are rotated to an open configuration in contrast to the closed configuration found in other cryptophyte species due to the insertion of a single amino acid, Asp-65, in a conserved region of the alpha chain. In the open form, the central chromophores are not in physical contact but are separated by a water-filled channel. Contains three phycoerythrobilin chromophores with binding mediated by both the alpha and beta subunits.

The protein resides in the plastid. It is found in the chloroplast thylakoid membrane. Functionally, light-harvesting photosynthetic tetrapyrrole chromophore-protein from the phycobiliprotein complex. This Hemiselmis andersenii (Cryptophyte alga) protein is Phycoerythrin alpha-3 subunit.